A 556-amino-acid chain; its full sequence is Serine beta-lactamase-like protein LACTB, mitochondrial (556 aa).

A mitochondrion-targeting transit peptide spans 1 to 117 (MYRLLSAVMA…RAIDSSRDLL (117 aa)). Catalysis depends on Ser-166, which acts as the Acyl-ester intermediate. Positions 249–282 (ESDQEKELKEKGGKSNEKNDFAKAKVEQDNETKG) are enriched in basic and acidic residues. The segment at 249-290 (ESDQEKELKEKGGKSNEKNDFAKAKVEQDNETKGRNSKPCKK) is disordered. 2 positions are modified to N6-succinyllysine: Lys-290 and Lys-291. An N6-acetyllysine mark is found at Lys-304 and Lys-349.

It belongs to the peptidase S12 family.

It localises to the mitochondrion. In terms of biological role, mitochondrial serine protease that acts as a regulator of mitochondrial lipid metabolism. Acts by decreasing protein levels of PISD, a mitochondrial enzyme that converts phosphatidylserine (PtdSer) to phosphatidylethanolamine (PtdEtn), thereby affecting mitochondrial lipid metabolism. It is unclear whether it acts directly by mediating proteolysis of PISD or by mediating proteolysis of another lipid metabolism protein. The polypeptide is Serine beta-lactamase-like protein LACTB, mitochondrial (Bos taurus (Bovine)).